The following is a 195-amino-acid chain: Protein A43 (195 aa).

A signal peptide spans 1-21 (MMIKWIISILTMSIMPVLVYS). The Extracellular portion of the chain corresponds to 23-166 (SIFRFRSEDV…YKDINDKYND (144 aa)). N-linked (GlcNAc...) asparagine; by host glycans are attached at residues N66 and N115. A helical membrane pass occupies residues 167–187 (IYDFTAICMLIASTLIVTIYV). The Cytoplasmic segment spans residues 188 to 195 (FKKIKMNS).

Belongs to the orthopoxvirus OPG172 protein family.

The protein resides in the host membrane. It is found in the host cell surface. This chain is Protein A43 (OPG172), found in Homo sapiens (Human).